The primary structure comprises 122 residues: UPF0344 protein BcerKBAB4_1054 (122 aa).

The next 4 membrane-spanning stretches (helical) occupy residues 6–26 (ITAW…YSAG), 38–58 (LMYI…VKTA), 65–85 (WYGM…MVLV), and 92–112 (PTGA…YLGL).

Belongs to the UPF0344 family.

It localises to the cell membrane. This chain is UPF0344 protein BcerKBAB4_1054, found in Bacillus mycoides (strain KBAB4) (Bacillus weihenstephanensis).